Consider the following 1577-residue polypeptide: Vacuolar protein sorting/targeting protein PEP1 (1577 aa).

Positions 1 to 21 (MILLHFVYSLWALLLIPLINA) are cleaved as a signal peptide. Over 22–1391 (EEFTPKVTKT…EFKEKYSVSA (1370 aa)) the chain is Lumenal. BNR repeat units lie at residues 58 to 68 (ISFDDGETWEK) and 101 to 111 (YITNDQGKSWE). Asn121 and Asn168 each carry an N-linked (GlcNAc...) asparagine glycan. BNR repeat units follow at residues 179-187 (SNDGGKSFS) and 414-423 (ISVDNGLTWT). Asn445 carries an N-linked (GlcNAc...) asparagine glycan. BNR repeat units follow at residues 485 to 495 (FISRDGGLTWK), 531 to 541 (YYSLDQGKTWT), and 762 to 771 (YISHDGGQTI). N-linked (GlcNAc...) asparagine glycosylation is present at Asn791. One copy of the BNR 8 repeat lies at 859–869 (YLTNDGGETFT). Asn1008 is a glycosylation site (N-linked (GlcNAc...) asparagine). BNR repeat units follow at residues 1141–1150 (FFTTDGGETW) and 1183–1192 (YSTDFGKTWK). The N-linked (GlcNAc...) asparagine glycan is linked to Asn1301. A helical transmembrane segment spans residues 1392–1412 (GPFAFIFISILLIIFFAAWFV). The Cytoplasmic segment spans residues 1413 to 1577 (YDRGIRRNGG…DSTAPSNENQ (165 aa)). The disordered stretch occupies residues 1531 to 1577 (DDVPTLEEEHTSYTDQPTTTDVPDALPEGNEENIDRPDSTAPSNENQ).

The protein belongs to the VPS10-related sortilin family.

The protein localises to the golgi apparatus. Its subcellular location is the trans-Golgi network membrane. The protein resides in the prevacuolar compartment membrane. In terms of biological role, functions as a sorting receptor in the Golgi compartment required for the intracellular sorting and delivery of soluble vacuolar proteins, like carboxypeptidase Y (CPY) and proteinase A. Executes multiple rounds of sorting by cycling between the late Golgi and a prevacuolar endosome-like compartment. Binds the Golgi-modified P2 form of CPY, and this interaction is dependent on the presence of an intact CPY vacuolar protein sorting signal. In Saccharomyces cerevisiae (strain Lalvin EC1118 / Prise de mousse) (Baker's yeast), this protein is Vacuolar protein sorting/targeting protein PEP1 (PEP1).